Consider the following 146-residue polypeptide: VHWSAEEKQLITGLWGKVNVADCGAEALARLLIVYPWTQRFFSSFGNLSSPTAILGNPMVRAHGKKVLTSFGDAVKNLDNIKNTFAQLSELHCDKLHVDPENFRLLGDILIIVLAAHFAKEFTPECQAAWQKLVRVVAHALARKYH.

Positions 2 to 146 (HWSAEEKQLI…VAHALARKYH (145 aa)) constitute a Globin domain. 2 residues coordinate heme b: H63 and H92.

It belongs to the globin family. In terms of assembly, heterotetramer of two alpha chains and two beta chains. As to expression, red blood cells.

Involved in oxygen transport from the lung to the various peripheral tissues. In Anser anser anser (Western greylag goose), this protein is Hemoglobin subunit beta (HBB).